The chain runs to 166 residues: NAD(P)H-quinone oxidoreductase subunit I, chloroplastic (166 aa).

4Fe-4S ferredoxin-type domains follow at residues 55-84 and 95-124; these read GRIHFEFDKCIACEVCVRVCPIDLPVVDWK and LNYSIDFGICIFCGNCVEYCPTNCLSMTEE. Residues cysteine 64, cysteine 67, cysteine 70, cysteine 74, cysteine 104, cysteine 107, cysteine 110, and cysteine 114 each contribute to the [4Fe-4S] cluster site.

This sequence belongs to the complex I 23 kDa subunit family. In terms of assembly, NDH is composed of at least 16 different subunits, 5 of which are encoded in the nucleus. It depends on [4Fe-4S] cluster as a cofactor.

It is found in the plastid. It localises to the chloroplast thylakoid membrane. The enzyme catalyses a plastoquinone + NADH + (n+1) H(+)(in) = a plastoquinol + NAD(+) + n H(+)(out). The catalysed reaction is a plastoquinone + NADPH + (n+1) H(+)(in) = a plastoquinol + NADP(+) + n H(+)(out). In terms of biological role, NDH shuttles electrons from NAD(P)H:plastoquinone, via FMN and iron-sulfur (Fe-S) centers, to quinones in the photosynthetic chain and possibly in a chloroplast respiratory chain. The immediate electron acceptor for the enzyme in this species is believed to be plastoquinone. Couples the redox reaction to proton translocation, and thus conserves the redox energy in a proton gradient. This chain is NAD(P)H-quinone oxidoreductase subunit I, chloroplastic, found in Espeletia timotensis (Andean giant rosette).